The primary structure comprises 325 residues: Putative gluconeogenesis factor (325 aa).

Belongs to the gluconeogenesis factor family.

The protein resides in the cytoplasm. Functionally, required for morphogenesis under gluconeogenic growth conditions. This Streptococcus pneumoniae serotype 4 (strain ATCC BAA-334 / TIGR4) protein is Putative gluconeogenesis factor.